A 97-amino-acid polypeptide reads, in one-letter code: UPF0235 protein Aasi_0294 (97 aa).

This sequence belongs to the UPF0235 family.

This chain is UPF0235 protein Aasi_0294, found in Amoebophilus asiaticus (strain 5a2).